The primary structure comprises 120 residues: Large ribosomal subunit protein uL18 (120 aa).

The protein belongs to the universal ribosomal protein uL18 family. As to quaternary structure, part of the 50S ribosomal subunit; part of the 5S rRNA/L5/L18/L25 subcomplex. Contacts the 5S and 23S rRNAs.

Functionally, this is one of the proteins that bind and probably mediate the attachment of the 5S RNA into the large ribosomal subunit, where it forms part of the central protuberance. The polypeptide is Large ribosomal subunit protein uL18 (Bacillus cereus (strain AH820)).